The chain runs to 95 residues: Cell division topological specificity factor (95 aa).

It belongs to the MinE family.

Its function is as follows. Prevents the cell division inhibition by proteins MinC and MinD at internal division sites while permitting inhibition at polar sites. This ensures cell division at the proper site by restricting the formation of a division septum at the midpoint of the long axis of the cell. This chain is Cell division topological specificity factor, found in Psychrobacter cryohalolentis (strain ATCC BAA-1226 / DSM 17306 / VKM B-2378 / K5).